A 432-amino-acid chain; its full sequence is Enolase (432 aa).

Glutamine 167 is a binding site for (2R)-2-phosphoglycerate. Glutamate 209 functions as the Proton donor in the catalytic mechanism. Residues aspartate 246, glutamate 290, and aspartate 317 each coordinate Mg(2+). 4 residues coordinate (2R)-2-phosphoglycerate: lysine 342, arginine 371, serine 372, and lysine 393. Catalysis depends on lysine 342, which acts as the Proton acceptor.

The protein belongs to the enolase family. In terms of assembly, component of the RNA degradosome, a multiprotein complex involved in RNA processing and mRNA degradation. Mg(2+) is required as a cofactor.

The protein localises to the cytoplasm. It is found in the secreted. It localises to the cell surface. It carries out the reaction (2R)-2-phosphoglycerate = phosphoenolpyruvate + H2O. The protein operates within carbohydrate degradation; glycolysis; pyruvate from D-glyceraldehyde 3-phosphate: step 4/5. In terms of biological role, catalyzes the reversible conversion of 2-phosphoglycerate (2-PG) into phosphoenolpyruvate (PEP). It is essential for the degradation of carbohydrates via glycolysis. The chain is Enolase from Klebsiella pneumoniae subsp. pneumoniae (strain ATCC 700721 / MGH 78578).